The following is a 177-amino-acid chain: ATP synthase subunit delta (177 aa).

This sequence belongs to the ATPase delta chain family. F-type ATPases have 2 components, F(1) - the catalytic core - and F(0) - the membrane proton channel. F(1) has five subunits: alpha(3), beta(3), gamma(1), delta(1), epsilon(1). F(0) has three main subunits: a(1), b(2) and c(10-14). The alpha and beta chains form an alternating ring which encloses part of the gamma chain. F(1) is attached to F(0) by a central stalk formed by the gamma and epsilon chains, while a peripheral stalk is formed by the delta and b chains.

The protein resides in the cell membrane. F(1)F(0) ATP synthase produces ATP from ADP in the presence of a proton or sodium gradient. F-type ATPases consist of two structural domains, F(1) containing the extramembraneous catalytic core and F(0) containing the membrane proton channel, linked together by a central stalk and a peripheral stalk. During catalysis, ATP synthesis in the catalytic domain of F(1) is coupled via a rotary mechanism of the central stalk subunits to proton translocation. Functionally, this protein is part of the stalk that links CF(0) to CF(1). It either transmits conformational changes from CF(0) to CF(1) or is implicated in proton conduction. The polypeptide is ATP synthase subunit delta (Carboxydothermus hydrogenoformans (strain ATCC BAA-161 / DSM 6008 / Z-2901)).